The following is a 387-amino-acid chain: Probable NADH-dependent butanol dehydrogenase 1 (387 aa).

It belongs to the iron-containing alcohol dehydrogenase family.

It participates in alcohol metabolism; butanol biosynthesis. In Bacillus subtilis (strain 168), this protein is Probable NADH-dependent butanol dehydrogenase 1 (yugJ).